Here is a 461-residue protein sequence, read N- to C-terminus: Photosystem II CP43 reaction center protein (461 aa).

Positions 1–2 (ME) are excised as a propeptide. Thr-3 is subject to N-acetylthreonine. A Phosphothreonine modification is found at Thr-3. Helical transmembrane passes span 57-81 (LFEVAHFVPEKPMYEQGLILLPHLA), 122-143 (LIGPETLEESFPFFGYVWKDKS), 166-188 (KSVYFGGVYDTWAPGGGDVRKIT), 243-263 (KPFAWARRAFVWSGEAYLSYS), and 279-300 (WFNNTAYPSEFYGPTGPEASQA). Glu-355 provides a ligand contact to [CaMn4O5] cluster. Residues 435–459 (RARAAAAGFEKGIDRDTEPVLSMTP) traverse the membrane as a helical segment.

Belongs to the PsbB/PsbC family. PsbC subfamily. PSII is composed of 1 copy each of membrane proteins PsbA, PsbB, PsbC, PsbD, PsbE, PsbF, PsbH, PsbI, PsbJ, PsbK, PsbL, PsbM, PsbT, PsbX, PsbY, PsbZ, Psb30/Ycf12, at least 3 peripheral proteins of the oxygen-evolving complex and a large number of cofactors. It forms dimeric complexes. Requires Binds multiple chlorophylls and provides some of the ligands for the Ca-4Mn-5O cluster of the oxygen-evolving complex. It may also provide a ligand for a Cl- that is required for oxygen evolution. PSII binds additional chlorophylls, carotenoids and specific lipids. as cofactor.

Its subcellular location is the plastid. The protein resides in the chloroplast thylakoid membrane. In terms of biological role, one of the components of the core complex of photosystem II (PSII). It binds chlorophyll and helps catalyze the primary light-induced photochemical processes of PSII. PSII is a light-driven water:plastoquinone oxidoreductase, using light energy to abstract electrons from H(2)O, generating O(2) and a proton gradient subsequently used for ATP formation. The sequence is that of Photosystem II CP43 reaction center protein from Psilotum nudum (Whisk fern).